Consider the following 401-residue polypeptide: Adaptive-response sensory kinase SasA (401 aa).

Positions 175 to 400 (MLVHDLRNPL…WFHFTLPVYP (226 aa)) constitute a Histidine kinase domain. Histidine 178 is subject to Phosphohistidine; by autocatalysis.

In terms of assembly, homooligomerizes. Interacts with KaiC. Participates in the KaiABC clock complex, whose core is composed of a KaiC homohexamer, 6 KaiB and up to 6 KaiA dimers. SasA and KaiB(fs) compete to bind to KaiC.

It catalyses the reaction ATP + protein L-histidine = ADP + protein N-phospho-L-histidine.. Its function is as follows. Member of the two-component regulatory system SasA/RpaA involved in genome-wide circadian gene expression. One of several clock output pathways. Participates in the Kai clock protein complex, the main circadian regulator in cyanobacteria, via its interaction with KaiC. KaiC enhances the autophosphorylation activity of SasA, which then transfers its phosphate group to RpaA to activate it. In addition to its output function, recruits fold-shifted KaiB (KaiB(fs)) to KaiC to cooperatively form the KaiB(6):KaiC(6) complex (independent of SasA kinase activity). Required for robustness of the circadian rhythm of gene expression and is involved in clock output, also required for adaptation to light/dark cycles. In Nostoc sp. (strain PCC 7120 / SAG 25.82 / UTEX 2576), this protein is Adaptive-response sensory kinase SasA.